Consider the following 555-residue polypeptide: Putative ankyrin repeat protein L283 (555 aa).

4 ANK repeats span residues 364-389 (TKVN…EDDI), 390-420 (VFKK…DINE), 422-447 (IKLA…KVRC), and 455-488 (GYLE…EGGK).

The polypeptide is Putative ankyrin repeat protein L283 (Acanthamoeba polyphaga mimivirus (APMV)).